The primary structure comprises 73 residues: Small ribosomal subunit protein bS18 (73 aa).

This sequence belongs to the bacterial ribosomal protein bS18 family. Part of the 30S ribosomal subunit. Forms a tight heterodimer with protein bS6.

Its function is as follows. Binds as a heterodimer with protein bS6 to the central domain of the 16S rRNA, where it helps stabilize the platform of the 30S subunit. This chain is Small ribosomal subunit protein bS18, found in Coxiella burnetii (strain Dugway 5J108-111).